We begin with the raw amino-acid sequence, 230 residues long: Large ribosomal subunit protein uL1 (230 aa).

The protein belongs to the universal ribosomal protein uL1 family. As to quaternary structure, part of the 50S ribosomal subunit.

Its function is as follows. Binds directly to 23S rRNA. The L1 stalk is quite mobile in the ribosome, and is involved in E site tRNA release. In terms of biological role, protein L1 is also a translational repressor protein, it controls the translation of the L11 operon by binding to its mRNA. The sequence is that of Large ribosomal subunit protein uL1 from Acidiphilium cryptum (strain JF-5).